We begin with the raw amino-acid sequence, 180 residues long: Cell division protein SepF (180 aa).

Positions 21-40 (LDDDYDDGRAVGRDDRRAMH) are disordered. Positions 27-40 (DGRAVGRDDRRAMH) are enriched in basic and acidic residues.

It belongs to the SepF family. In terms of assembly, homodimer. Interacts with FtsZ.

Its subcellular location is the cytoplasm. Its function is as follows. Cell division protein that is part of the divisome complex and is recruited early to the Z-ring. Probably stimulates Z-ring formation, perhaps through the cross-linking of FtsZ protofilaments. Its function overlaps with FtsA. The protein is Cell division protein SepF of Frankia casuarinae (strain DSM 45818 / CECT 9043 / HFP020203 / CcI3).